Here is a 304-residue protein sequence, read N- to C-terminus: Porphobilinogen deaminase (304 aa).

Cysteine 240 is modified (S-(dipyrrolylmethanemethyl)cysteine).

It belongs to the HMBS family. As to quaternary structure, monomer. Requires dipyrromethane as cofactor.

The enzyme catalyses 4 porphobilinogen + H2O = hydroxymethylbilane + 4 NH4(+). Its pathway is porphyrin-containing compound metabolism; protoporphyrin-IX biosynthesis; coproporphyrinogen-III from 5-aminolevulinate: step 2/4. Tetrapolymerization of the monopyrrole PBG into the hydroxymethylbilane pre-uroporphyrinogen in several discrete steps. This chain is Porphobilinogen deaminase, found in Xanthomonas oryzae pv. oryzae (strain MAFF 311018).